The primary structure comprises 614 residues: WD repeat-containing protein 26 (614 aa).

2 stretches are compositionally biased toward low complexity: residues 1-19 and 34-44; these read MQANGAAAAAAGEEPAGSG and SNGVLSSNNGL. The interval 1–65 is disordered; the sequence is MQANGAAAAA…PGGRKKKRLS (65 aa). Positions 67–99 constitute a LisH domain; sequence ADEDVIRLIGQHLHGLGLNQTVDLLMQESGCRL. Residues 100 to 184 form the CTLH domain; the sequence is EHPSATKFRN…EYLEDGKVLE (85 aa). WD repeat units follow at residues 306-345, 352-391, 397-437, 477-516, 519-561, and 564-604; these read EHCNEVWFCKFSNDGTKLATGSKDTTVIIWQVDPDTHQLK, GHAYGVSYLAWSPDDNYLIACGPDDCSELWLWNVQTGELR, SHED…DSWE, QEDHPIMSFTISRNGRLALLNVATQGVHLWDLQDRVLVRK, GVTQ…PIAE, and GHTR…DNQE.

As to quaternary structure, forms homooligomers. Identified in the CTLH complex that contains at least MAEA, RMND5A (or alternatively its paralog RMND5B), GID8, WDR26, and RANBP9 and/or RANBP10. Interacts with DDB1-CUL4A/B E3 ligase complexes.

It is found in the cytoplasm. It localises to the nucleus. Its subcellular location is the mitochondrion. In terms of biological role, G-beta-like protein involved in cell signal transduction. Acts as a negative regulator in MAPK signaling pathway. Functions as a scaffolding protein to promote G beta:gamma-mediated PLCB2 plasma membrane translocation and subsequent activation in leukocytes. Core component of the CTLH E3 ubiquitin-protein ligase complex that mediates ubiquitination and subsequent proteasomal degradation of target proteins. Acts as a negative regulator of the canonical Wnt signaling pathway through preventing ubiquitination of beta-catenin CTNNB1 by the beta-catenin destruction complex, thus negatively regulating CTNNB1 degradation. Serves as a scaffold to coordinate PI3K/AKT pathway-driven cell growth and migration. Protects cells from oxidative stress-induced apoptosis via the down-regulation of AP-1 transcriptional activity as well as by inhibiting cytochrome c release from mitochondria. Also protects cells by promoting hypoxia-mediated autophagy and mitophagy. The protein is WD repeat-containing protein 26 (wdr26) of Xenopus tropicalis (Western clawed frog).